Consider the following 341-residue polypeptide: tRNA N6-adenosine threonylcarbamoyltransferase (341 aa).

His-111 and His-115 together coordinate Fe cation. Residues 134–138, Asp-167, Gly-180, and Asn-276 each bind substrate; that span reads LVSGG. Asp-304 lines the Fe cation pocket.

This sequence belongs to the KAE1 / TsaD family. The cofactor is Fe(2+).

The protein resides in the cytoplasm. It carries out the reaction L-threonylcarbamoyladenylate + adenosine(37) in tRNA = N(6)-L-threonylcarbamoyladenosine(37) in tRNA + AMP + H(+). In terms of biological role, required for the formation of a threonylcarbamoyl group on adenosine at position 37 (t(6)A37) in tRNAs that read codons beginning with adenine. Is involved in the transfer of the threonylcarbamoyl moiety of threonylcarbamoyl-AMP (TC-AMP) to the N6 group of A37, together with TsaE and TsaB. TsaD likely plays a direct catalytic role in this reaction. The sequence is that of tRNA N6-adenosine threonylcarbamoyltransferase from Pseudomonas syringae pv. syringae (strain B728a).